Consider the following 135-residue polypeptide: Small ribosomal subunit protein bS6 (135 aa).

Positions 96–135 (HAEGPSIQMQKRDERERGDRGDRSDRGDRGDRGDRGGFRR) are disordered. A compositionally biased stretch (basic and acidic residues) spans 105-135 (QKRDERERGDRGDRSDRGDRGDRGDRGGFRR).

It belongs to the bacterial ribosomal protein bS6 family.

In terms of biological role, binds together with bS18 to 16S ribosomal RNA. The protein is Small ribosomal subunit protein bS6 of Cereibacter sphaeroides (strain ATCC 17029 / ATH 2.4.9) (Rhodobacter sphaeroides).